Consider the following 417-residue polypeptide: NADH-quinone oxidoreductase subunit D (417 aa).

This sequence belongs to the complex I 49 kDa subunit family. As to quaternary structure, NDH-1 is composed of 14 different subunits. Subunits NuoB, C, D, E, F, and G constitute the peripheral sector of the complex.

Its subcellular location is the cell inner membrane. It carries out the reaction a quinone + NADH + 5 H(+)(in) = a quinol + NAD(+) + 4 H(+)(out). NDH-1 shuttles electrons from NADH, via FMN and iron-sulfur (Fe-S) centers, to quinones in the respiratory chain. The immediate electron acceptor for the enzyme in this species is believed to be ubiquinone. Couples the redox reaction to proton translocation (for every two electrons transferred, four hydrogen ions are translocated across the cytoplasmic membrane), and thus conserves the redox energy in a proton gradient. The sequence is that of NADH-quinone oxidoreductase subunit D from Burkholderia ambifaria (strain ATCC BAA-244 / DSM 16087 / CCUG 44356 / LMG 19182 / AMMD) (Burkholderia cepacia (strain AMMD)).